We begin with the raw amino-acid sequence, 496 residues long: MATSNKNMLLNYVPVYVMLPLGVINVNNVFEDPDGLKEQLVQLRAAGVDGVMVDVWWGIIEQKGPKEYDWSAYKSLFQLVQECGLKLQAIMSFHQCGGNVGDVVTIPIPQWVLDIGESDPDIFYTNRSGTRDKEYLTVGVDNKPIFHGRTAIEIYSDYMKSFRENMSEFLKSELIIDIEVGLGPAGELRYPSYPQNQGWVFPGIGEFQCYDKYLKADFKAAAAKAGHSEWELPDDAGTYNDIPESTEFFKTNGTYLTEKGKFFLTWYSNQLLNHGDQILDEANKAFLGCKVKLAIKVSGIHWWYKAQNHAAELTAGYYNLDDRDGYRPIAKMVSRHHGILNFTCLEMRDSEQSSDAQSAPQELVQQVLSGGWRENIEVAGENALSRYDATAYNQIILNARPQGVNKDGPPKLRMYGVTYLRLSDDLLQESNFEIFKKFVVKMHADQSHCDDPQEYNHAIPPLKRSGPNIPVDDLLEATKPILPFPWDSETDMKVDG.

Asp-54, His-94, and Asp-102 together coordinate substrate. Glu-187 serves as the catalytic Proton donor. Positions 296, 301, and 343 each coordinate substrate. The active-site Proton acceptor is Glu-381. Substrate-binding positions include 382 to 383 (NA) and Arg-421.

It belongs to the glycosyl hydrolase 14 family.

It carries out the reaction Hydrolysis of (1-&gt;4)-alpha-D-glucosidic linkages in polysaccharides so as to remove successive maltose units from the non-reducing ends of the chains.. The protein is Beta-amylase (BMY1) of Trifolium repens (Creeping white clover).